A 454-amino-acid polypeptide reads, in one-letter code: tRNA modification GTPase MnmE (454 aa).

3 residues coordinate (6S)-5-formyl-5,6,7,8-tetrahydrofolate: Arg-23, Glu-80, and Lys-120. A TrmE-type G domain is found at Gly-216 to Gly-377. Asn-226 is a binding site for K(+). Residues Asn-226 to Ser-231, Thr-245 to Thr-251, Asp-270 to Gly-273, Asn-335 to Asp-338, and Ser-358 to Arg-360 each bind GTP. Ser-230 serves as a coordination point for Mg(2+). Residues Thr-245, Ile-247, and Thr-250 each contribute to the K(+) site. Residue Thr-251 participates in Mg(2+) binding. Lys-454 provides a ligand contact to (6S)-5-formyl-5,6,7,8-tetrahydrofolate.

It belongs to the TRAFAC class TrmE-Era-EngA-EngB-Septin-like GTPase superfamily. TrmE GTPase family. Homodimer. Heterotetramer of two MnmE and two MnmG subunits. K(+) is required as a cofactor.

It is found in the cytoplasm. In terms of biological role, exhibits a very high intrinsic GTPase hydrolysis rate. Involved in the addition of a carboxymethylaminomethyl (cmnm) group at the wobble position (U34) of certain tRNAs, forming tRNA-cmnm(5)s(2)U34. This Escherichia coli O7:K1 (strain IAI39 / ExPEC) protein is tRNA modification GTPase MnmE.